The chain runs to 121 residues: MVRIESSQPRKQRKARYDAPSHMRSKFLNAPLSATLRETYEKKTIRVIKGDTVKVTRGDHVGEEGIVDGIDTRNVKIIVHGVSSTKVDGTEVPRPIDASKVEITKLKLDDKRRVEKLGGKE.

A disordered region spans residues 1–23; the sequence is MVRIESSQPRKQRKARYDAPSHM.

It belongs to the universal ribosomal protein uL24 family. Part of the 50S ribosomal subunit.

One of two assembly initiator proteins, it binds directly to the 5'-end of the 23S rRNA, where it nucleates assembly of the 50S subunit. Functionally, located at the polypeptide exit tunnel on the outside of the subunit. In Methanoregula boonei (strain DSM 21154 / JCM 14090 / 6A8), this protein is Large ribosomal subunit protein uL24.